Consider the following 306-residue polypeptide: Ornithine carbamoyltransferase (306 aa).

Carbamoyl phosphate is bound by residues Ser53–Thr56, Gln80, Arg104, and His131–Gln134. L-ornithine contacts are provided by residues Asn162, Asp220, and Ser224 to Met225. Carbamoyl phosphate contacts are provided by residues Cys260 to Leu261 and Arg288.

It belongs to the aspartate/ornithine carbamoyltransferase superfamily. OTCase family.

It is found in the cytoplasm. The enzyme catalyses carbamoyl phosphate + L-ornithine = L-citrulline + phosphate + H(+). It participates in amino-acid biosynthesis; L-arginine biosynthesis; L-arginine from L-ornithine and carbamoyl phosphate: step 1/3. In terms of biological role, reversibly catalyzes the transfer of the carbamoyl group from carbamoyl phosphate (CP) to the N(epsilon) atom of ornithine (ORN) to produce L-citrulline. The sequence is that of Ornithine carbamoyltransferase from Methylobacillus flagellatus (strain ATCC 51484 / DSM 6875 / VKM B-1610 / KT).